Consider the following 316-residue polypeptide: Thiamine-monophosphate kinase (316 aa).

Mg(2+) contacts are provided by aspartate 26, threonine 49, and aspartate 50. Aspartate 57 contributes to the substrate binding site. A Mg(2+)-binding site is contributed by aspartate 79. ATP-binding positions include tyrosine 109, glycine 126–aspartate 127, and arginine 151. Aspartate 127 serves as a coordination point for Mg(2+). Residue aspartate 198 coordinates Mg(2+). Residue serine 200 coordinates ATP. Aspartate 201 serves as a coordination point for Mg(2+). Substrate contacts are provided by glutamate 251 and phenylalanine 305.

This sequence belongs to the thiamine-monophosphate kinase family.

It catalyses the reaction thiamine phosphate + ATP = thiamine diphosphate + ADP. It participates in cofactor biosynthesis; thiamine diphosphate biosynthesis; thiamine diphosphate from thiamine phosphate: step 1/1. In terms of biological role, catalyzes the ATP-dependent phosphorylation of thiamine-monophosphate (TMP) to form thiamine-pyrophosphate (TPP), the active form of vitamin B1. The chain is Thiamine-monophosphate kinase from Rhodopirellula baltica (strain DSM 10527 / NCIMB 13988 / SH1).